We begin with the raw amino-acid sequence, 312 residues long: RNA binding protein fox-1 homolog 3 (312 aa).

Over residues 1 to 29 (MAQPYPPAQYPPPPQNGIPAEYAPPPPHP) the composition is skewed to pro residues. The disordered stretch occupies residues 1-104 (MAQPYPPAQY…KQQPKRLHVS (104 aa)). A compositionally biased stretch (polar residues) spans 49–87 (TPAQTHPEQPGSEASTQPIAGTQTVPQTDEAAQTDSQPL). The RRM domain occupies 100–175 (RLHVSNIPFR…RKIEVNNATA (76 aa)). An Asymmetric dimethylarginine; alternate modification is found at Arg223. The residue at position 223 (Arg223) is an Omega-N-methylarginine; alternate. An Asymmetric dimethylarginine modification is found at Arg272.

It localises to the nucleus. The protein localises to the cytoplasm. In terms of biological role, pre-mRNA alternative splicing regulator. Regulates alternative splicing of RBFOX2 to enhance the production of mRNA species that are targeted for nonsense-mediated decay (NMD). This chain is RNA binding protein fox-1 homolog 3 (RBFOX3), found in Homo sapiens (Human).